We begin with the raw amino-acid sequence, 102 residues long: Small ribosomal subunit protein uS10 (102 aa).

The protein belongs to the universal ribosomal protein uS10 family. Part of the 30S ribosomal subunit.

In terms of biological role, involved in the binding of tRNA to the ribosomes. The chain is Small ribosomal subunit protein uS10 from Pediococcus pentosaceus (strain ATCC 25745 / CCUG 21536 / LMG 10740 / 183-1w).